Consider the following 337-residue polypeptide: ATP-dependent 6-phosphofructokinase (337 aa).

ATP is bound at residue glycine 11. 21–25 (RAVVR) contributes to the ADP binding site. Residues 72–73 (RY) and 102–105 (GDGS) contribute to the ATP site. Aspartate 103 serves as a coordination point for Mg(2+). Position 125 to 127 (125 to 127 (TID)) interacts with substrate. Catalysis depends on aspartate 127, which acts as the Proton acceptor. ADP is bound at residue arginine 154. Substrate is bound by residues arginine 162 and 169 to 171 (MGR). ADP contacts are provided by residues 185–187 (GAD), arginine 212, and 214–216 (KNH). Residues glutamate 223, arginine 245, and 251-254 (HILR) contribute to the substrate site.

Belongs to the phosphofructokinase type A (PFKA) family. ATP-dependent PFK group I subfamily. Prokaryotic clade 'B1' sub-subfamily. As to quaternary structure, homotetramer. The cofactor is Mg(2+).

It localises to the cytoplasm. The catalysed reaction is beta-D-fructose 6-phosphate + ATP = beta-D-fructose 1,6-bisphosphate + ADP + H(+). It participates in carbohydrate degradation; glycolysis; D-glyceraldehyde 3-phosphate and glycerone phosphate from D-glucose: step 3/4. Allosterically activated by ADP and other diphosphonucleosides, and allosterically inhibited by phosphoenolpyruvate. In terms of biological role, catalyzes the phosphorylation of D-fructose 6-phosphate to fructose 1,6-bisphosphate by ATP, the first committing step of glycolysis. The polypeptide is ATP-dependent 6-phosphofructokinase (Streptococcus equi subsp. equi (strain 4047)).